The chain runs to 70 residues: Deleted in esophageal cancer 1 (70 aa).

Expressed in many tissues, with highest expression in prostate and testis. Reduced expression in esophageal carcinomas.

In terms of biological role, candidate tumor suppressor. The polypeptide is Deleted in esophageal cancer 1 (Homo sapiens (Human)).